Consider the following 400-residue polypeptide: GTPase-binding protein rid1 (400 aa).

Polar residues predominate over residues 16 to 27 (LSSDGLSESVNS). The interval 16–47 (LSSDGLSESVNSSDREDSLSFQTPSTPSEDEM) is disordered. A GBD/FH3 domain is found at 39-400 (PSTPSEDEMP…PYKLVQTGST (362 aa)).

The protein resides in the cytoplasm. The protein is GTPase-binding protein rid1 (rid1) of Schizosaccharomyces pombe (strain 972 / ATCC 24843) (Fission yeast).